A 315-amino-acid polypeptide reads, in one-letter code: Small ribosomal subunit protein mS45 (315 aa).

A mitochondrion-targeting transit peptide spans 1 to 66 (MRNSVEFSQL…SKYVACNSRS (66 aa)).

It belongs to the mitochondrion-specific ribosomal protein mS45 family. Component of the mitochondrial small ribosomal subunit (mt-SSU). Mature yeast 74S mitochondrial ribosomes consist of a small (37S) and a large (54S) subunit. The 37S small subunit contains a 15S ribosomal RNA (15S mt-rRNA) and at least 32 different proteins. The 54S large subunit contains a 21S rRNA (21S mt-rRNA) and at least 45 different proteins.

The protein localises to the mitochondrion. In terms of biological role, component of the mitochondrial ribosome (mitoribosome), a dedicated translation machinery responsible for the synthesis of mitochondrial genome-encoded proteins, including at least some of the essential transmembrane subunits of the mitochondrial respiratory chain. The mitoribosomes are attached to the mitochondrial inner membrane and translation products are cotranslationally integrated into the membrane. Required for mitochondrial protein synthesis. Has a role in mitochondrial integrity and cell respiration. This is Small ribosomal subunit protein mS45 (bot1) from Schizosaccharomyces pombe (strain 972 / ATCC 24843) (Fission yeast).